The following is a 504-amino-acid chain: Probable ergothioneine transporter EgtUBC (504 aa).

Residues 19 to 198 enclose the ABC transmembrane type-1 domain; the sequence is LVQHIQISFV…LLAILFDFLL (180 aa). Transmembrane regions (helical) follow at residues 25-44, 57-74, 81-97, 146-170, 179-198, and 210-229; these read ISFVSLFIAVLIALPLGIYL, VAAIFQTIPSLALLGLLI, IVPAIIALVIYALLPIL, MVLIIGTATLAALIGAGGLGDLILL, LILLGAIPAALLAILFDFLL, and IITISAGILLTAAIIVVPYF. The segment at 231 to 504 is ergothioneine binding domain; it reads SDKKEITIAG…DYLKDQGIIK (274 aa).

It in the N-terminal section; belongs to the binding-protein-dependent transport system permease family. This sequence in the C-terminal section; belongs to the OsmX family. As to quaternary structure, the complex is probably composed of at least an ATP-binding protein (EgtUA) and a transmembrane protein (EgtUBC).

It is found in the membrane. Its function is as follows. Part of an ABC transporter complex EgtU required for the uptake of ergothioneine (EGT), a natural low-molecular weight (LMW) thiol antioxidant. Responsible for the translocation of the substrate across the membrane. Also contains a C-terminal periplasmic solute-binding domain (SBD) which binds to EGT with sub-micromolar affinity. Does not bind glycine betaine, carnitine, choline, proline, or cholate. Plays a role in bile acid tolerance. Dispensable for choline uptake. Probably not involved in betaine, carnitine or choline mediated osmo- or chill tolerance. Plays a role in enhancing virulence in mice. The sequence is that of Probable ergothioneine transporter EgtUBC from Listeria monocytogenes serovar 1/2a (strain ATCC BAA-679 / EGD-e).